Consider the following 856-residue polypeptide: Leucine--tRNA ligase (856 aa).

Residues 53-63 (PYPSGNLHMGH) carry the 'HIGH' region motif. Positions 622–626 (KMSKS) match the 'KMSKS' region motif. Position 625 (K625) interacts with ATP.

Belongs to the class-I aminoacyl-tRNA synthetase family.

The protein resides in the cytoplasm. The catalysed reaction is tRNA(Leu) + L-leucine + ATP = L-leucyl-tRNA(Leu) + AMP + diphosphate. This chain is Leucine--tRNA ligase, found in Prochlorococcus marinus (strain AS9601).